A 621-amino-acid chain; its full sequence is Alpha-actinin-like protein 1 (621 aa).

2 consecutive Calponin-homology (CH) domains span residues 8 to 114 (SVQN…LRFT) and 123 to 230 (LTAK…HAFS). Residues 86 to 110 (LTNIGPADIVDGNLKLILGLIWTLI) form an actin-binding region. 3 consecutive EF-hand domains span residues 388–419 (LSTISNEITNLQGDWRDQLDHVEFLQEHLGPL), 487–549 (DGIT…EIVM), and 550–618 (EELE…AEDK).

It belongs to the alpha-actinin family.

It localises to the cytoplasm. It is found in the cytoskeleton. Functionally, binds to actin and is involved in actin-ring formation and organization. Plays a role in cytokinesis and is involved in septation. The protein is Alpha-actinin-like protein 1 (ain1) of Schizosaccharomyces pombe (strain 972 / ATCC 24843) (Fission yeast).